The chain runs to 419 residues: Ribosomal RNA large subunit methyltransferase G (419 aa).

Residues Lys386 to Pro408 show a composition bias toward basic and acidic residues. The interval Lys386–Lys419 is disordered. Positions His409–Lys419 are enriched in polar residues.

The protein belongs to the methyltransferase superfamily. RlmG family.

The protein resides in the cytoplasm. It catalyses the reaction guanosine(1835) in 23S rRNA + S-adenosyl-L-methionine = N(2)-methylguanosine(1835) in 23S rRNA + S-adenosyl-L-homocysteine + H(+). Its function is as follows. Specifically methylates the guanine in position 1835 (m2G1835) of 23S rRNA. The sequence is that of Ribosomal RNA large subunit methyltransferase G from Shewanella woodyi (strain ATCC 51908 / MS32).